Consider the following 100-residue polypeptide: MIYEKILLKVLLGPHISEKSSTLSGNFSTVIIKVSICATKLEIKRAVQNMFNVAVKNVNTLVVQGKCKRKKSRITCSSNWKKAYVTLKRGQNINFIGSSE.

The protein belongs to the universal ribosomal protein uL23 family. Part of the 50S ribosomal subunit. Contacts protein L29, and trigger factor when it is bound to the ribosome.

In terms of biological role, one of the early assembly proteins it binds 23S rRNA. One of the proteins that surrounds the polypeptide exit tunnel on the outside of the ribosome. Forms the main docking site for trigger factor binding to the ribosome. The sequence is that of Large ribosomal subunit protein uL23 from Buchnera aphidicola subsp. Baizongia pistaciae (strain Bp).